A 317-amino-acid chain; its full sequence is Ferrochelatase (317 aa).

Histidine 184 and glutamate 259 together coordinate Fe cation.

The protein belongs to the ferrochelatase family.

The protein localises to the cytoplasm. The catalysed reaction is heme b + 2 H(+) = protoporphyrin IX + Fe(2+). It functions in the pathway porphyrin-containing compound metabolism; protoheme biosynthesis; protoheme from protoporphyrin-IX: step 1/1. In terms of biological role, catalyzes the ferrous insertion into protoporphyrin IX. This Chlamydia muridarum (strain MoPn / Nigg) protein is Ferrochelatase.